The chain runs to 429 residues: Adenylosuccinate synthetase (429 aa).

Residues 12-18 (GDEGKGK) and 40-42 (GHT) contribute to the GTP site. Asp13 functions as the Proton acceptor in the catalytic mechanism. Mg(2+)-binding residues include Asp13 and Gly40. IMP is bound by residues 13–16 (DEGK), 38–41 (NAGH), Thr129, Arg143, Gln223, Thr238, and Arg302. His41 acts as the Proton donor in catalysis. 298 to 304 (TVTGRPR) contacts substrate. GTP-binding positions include Arg304, 330-332 (KLD), and 412-414 (STS).

It belongs to the adenylosuccinate synthetase family. In terms of assembly, homodimer. Requires Mg(2+) as cofactor.

It localises to the cytoplasm. It carries out the reaction IMP + L-aspartate + GTP = N(6)-(1,2-dicarboxyethyl)-AMP + GDP + phosphate + 2 H(+). It participates in purine metabolism; AMP biosynthesis via de novo pathway; AMP from IMP: step 1/2. Plays an important role in the de novo pathway of purine nucleotide biosynthesis. Catalyzes the first committed step in the biosynthesis of AMP from IMP. The protein is Adenylosuccinate synthetase of Rhodospirillum rubrum (strain ATCC 11170 / ATH 1.1.1 / DSM 467 / LMG 4362 / NCIMB 8255 / S1).